Consider the following 267-residue polypeptide: Beta-lactamase OXA-5 (267 aa).

The first 19 residues, 1–19, serve as a signal peptide directing secretion; that stretch reads MKTIAAYLVLVFYASTALS. Residue Ser67 is the Acyl-ester intermediate of the active site. At Lys70 the chain carries N6-carboxylysine. 205–207 provides a ligand contact to substrate; it reads KTG.

This sequence belongs to the class-D beta-lactamase family.

The catalysed reaction is a beta-lactam + H2O = a substituted beta-amino acid. With respect to regulation, inhibited by clavulanic acid. Hydrolyzes both oxacillin and methicillin. The chain is Beta-lactamase OXA-5 (bla) from Pseudomonas aeruginosa.